The following is a 392-amino-acid chain: Chorismate synthase (392 aa).

The NADP(+) site is built by Arg-40 and Arg-46. FMN contacts are provided by residues 129 to 131 (RSS), 257 to 258 (QA), Gly-302, 317 to 321 (KPIAT), and Arg-343.

This sequence belongs to the chorismate synthase family. In terms of assembly, homotetramer. The cofactor is FMNH2.

It carries out the reaction 5-O-(1-carboxyvinyl)-3-phosphoshikimate = chorismate + phosphate. Its pathway is metabolic intermediate biosynthesis; chorismate biosynthesis; chorismate from D-erythrose 4-phosphate and phosphoenolpyruvate: step 7/7. Its function is as follows. Catalyzes the anti-1,4-elimination of the C-3 phosphate and the C-6 proR hydrogen from 5-enolpyruvylshikimate-3-phosphate (EPSP) to yield chorismate, which is the branch point compound that serves as the starting substrate for the three terminal pathways of aromatic amino acid biosynthesis. This reaction introduces a second double bond into the aromatic ring system. The chain is Chorismate synthase from Chloroherpeton thalassium (strain ATCC 35110 / GB-78).